The primary structure comprises 95 residues: Co-chaperonin GroES (95 aa).

The protein belongs to the GroES chaperonin family. In terms of assembly, heptamer of 7 subunits arranged in a ring. Interacts with the chaperonin GroEL.

It localises to the cytoplasm. Together with the chaperonin GroEL, plays an essential role in assisting protein folding. The GroEL-GroES system forms a nano-cage that allows encapsulation of the non-native substrate proteins and provides a physical environment optimized to promote and accelerate protein folding. GroES binds to the apical surface of the GroEL ring, thereby capping the opening of the GroEL channel. This is Co-chaperonin GroES from Stenotrophomonas maltophilia (strain K279a).